Here is a 782-residue protein sequence, read N- to C-terminus: E3 UFM1-protein ligase 1 homolog (782 aa).

The segment at 404-478 (NVSTQELEDE…SRGGGGASKK (75 aa)) is disordered.

This sequence belongs to the UFL1 family.

Functionally, E3 UFM1-protein ligase that mediates ufmylation of target proteins. In Drosophila melanogaster (Fruit fly), this protein is E3 UFM1-protein ligase 1 homolog.